Here is a 234-residue protein sequence, read N- to C-terminus: Covalently-linked cell wall protein 14 (234 aa).

The first 22 residues, 1 to 22, serve as a signal peptide directing secretion; the sequence is MASFLKISTLIAIVSTLQTTLA. One can recognise a CFEM domain in the interval 23 to 109; it reads APPACLLACV…SSEESSASAS (87 aa). 4 disulfide bridges follow: cysteine 27–cysteine 66, cysteine 31–cysteine 61, cysteine 41–cysteine 49, and cysteine 51–cysteine 82. Aspartate 46 provides a ligand contact to heme. The segment covering 86-207 has biased composition (low complexity); that stretch reads SSQSSSSESE…ASSSESTTAT (122 aa). A disordered region spans residues 86–208; the sequence is SSQSSSSESE…SSSESTTATG (123 aa). Glycine 215 is lipidated: GPI-anchor amidated glycine. A propeptide spans 216 to 234 (removed in mature form); it reads SAAKVGLGALVGLVGAVLL.

The protein belongs to the CCW14 family. The GPI-anchor is attached to the protein in the endoplasmic reticulum and serves to target the protein to the cell surface. There, the glucosamine-inositol phospholipid moiety is cleaved off and the GPI-modified mannoprotein is covalently attached via its lipidless GPI glycan remnant to the 1,6-beta-glucan of the outer cell wall layer.

The protein localises to the secreted. The protein resides in the cell wall. It localises to the membrane. Beta-glucan associated cell wall protein involved in cell wall structure. May serve as cross-linking or coat-forming wall protein. The chain is Covalently-linked cell wall protein 14 (SSR1) from Candida albicans (strain SC5314 / ATCC MYA-2876) (Yeast).